The following is a 214-amino-acid chain: Urease accessory protein UreF (214 aa).

It belongs to the UreF family. UreD, UreF and UreG form a complex that acts as a GTP-hydrolysis-dependent molecular chaperone, activating the urease apoprotein by helping to assemble the nickel containing metallocenter of UreC. The UreE protein probably delivers the nickel.

The protein localises to the cytoplasm. In terms of biological role, required for maturation of urease via the functional incorporation of the urease nickel metallocenter. This chain is Urease accessory protein UreF, found in Ruegeria sp. (strain TM1040) (Silicibacter sp.).